The chain runs to 55 residues: Large ribosomal subunit protein bL32 (55 aa).

Over residues 1–23 the composition is skewed to basic residues; that stretch reads MAVPKKKTSKAKRDQRRAHWKRK. The disordered stretch occupies residues 1–26; sequence MAVPKKKTSKAKRDQRRAHWKRKATI.

Belongs to the bacterial ribosomal protein bL32 family.

The polypeptide is Large ribosomal subunit protein bL32 (Picosynechococcus sp. (strain ATCC 27264 / PCC 7002 / PR-6) (Agmenellum quadruplicatum)).